Reading from the N-terminus, the 394-residue chain is Queuine tRNA-ribosyltransferase accessory subunit 2 (394 aa).

The Zn(2+) site is built by Cys-336, Cys-338, Cys-341, and His-367.

The protein belongs to the queuine tRNA-ribosyltransferase family. QTRT2 subfamily. As to quaternary structure, heterodimer of a catalytic subunit and an accessory subunit. Zn(2+) is required as a cofactor.

The protein localises to the cytoplasm. Non-catalytic subunit of the queuine tRNA-ribosyltransferase (TGT) that catalyzes the base-exchange of a guanine (G) residue with queuine (Q) at position 34 (anticodon wobble position) in tRNAs with GU(N) anticodons (tRNA-Asp, -Asn, -His and -Tyr), resulting in the hypermodified nucleoside queuosine (7-(((4,5-cis-dihydroxy-2-cyclopenten-1-yl)amino)methyl)-7-deazaguanosine). This is Queuine tRNA-ribosyltransferase accessory subunit 2 from Ixodes scapularis (Black-legged tick).